A 191-amino-acid chain; its full sequence is Phospholipase A2-delta (191 aa).

An N-terminal signal peptide occupies residues 1-25 (MIRGGALTHVALGLTVFLLLAVVHS). 6 disulfide bridges follow: Cys29-Cys56, Cys33-Cys62, Cys38-Cys115, Cys49-Cys69, Cys68-Cys93, and Cys75-Cys86. Ca(2+) contacts are provided by Tyr48, Gly50, and Tyr53. The active site involves His72. Asp73 is a binding site for Ca(2+). Positions 161 to 191 (KADTKDGLGTNQGPQTKDGSKVSVPMNPSPS) are disordered.

The protein belongs to the phospholipase A2 family. It depends on Ca(2+) as a cofactor. In terms of tissue distribution, specifically expressed in flowers but at a low level. Detected specifically in the pollen.

Its subcellular location is the secreted. The protein resides in the endoplasmic reticulum. The catalysed reaction is a 1,2-diacyl-sn-glycero-3-phosphocholine + H2O = a 1-acyl-sn-glycero-3-phosphocholine + a fatty acid + H(+). Functionally, PA2 catalyzes the calcium-dependent hydrolysis of the 2-acyl groups in 3-sn-phosphoglycerides. Releases lysophospholipids (LPLs) and free fatty acids (FFAs) from membrane phospholipids in response to hormones and other external stimuli. Plays a role in pollen development and germination and tube growth. The polypeptide is Phospholipase A2-delta (PLA2-DELTA) (Arabidopsis thaliana (Mouse-ear cress)).